Reading from the N-terminus, the 490-residue chain is GTPase Der (490 aa).

EngA-type G domains lie at 3-167 (FTLA…DAFE) and 203-378 (LQVA…EVWN). GTP contacts are provided by residues 9 to 16 (GRPNVGKS), 56 to 60 (DTAGL), 119 to 122 (NKAE), 209 to 216 (GRPNAGKS), 256 to 260 (DTAGM), and 321 to 324 (NKWD). Residues 379–465 (RRVPTAALNR…RLTMRSQSDA (87 aa)) enclose the KH-like domain. A disordered region spans residues 451–490 (PGTPIRLTMRSQSDANPYKNRKKSTPSRLRKHLGKPSLKG). The span at 469-484 (KNRKKSTPSRLRKHLG) shows a compositional bias: basic residues.

Belongs to the TRAFAC class TrmE-Era-EngA-EngB-Septin-like GTPase superfamily. EngA (Der) GTPase family. Associates with the 50S ribosomal subunit.

GTPase that plays an essential role in the late steps of ribosome biogenesis. This is GTPase Der from Dinoroseobacter shibae (strain DSM 16493 / NCIMB 14021 / DFL 12).